The chain runs to 151 residues: Putative pre-16S rRNA nuclease (151 aa).

It belongs to the YqgF nuclease family.

The protein localises to the cytoplasm. Its function is as follows. Could be a nuclease involved in processing of the 5'-end of pre-16S rRNA. This Aster yellows witches'-broom phytoplasma (strain AYWB) protein is Putative pre-16S rRNA nuclease.